A 289-amino-acid chain; its full sequence is ATP phosphoribosyltransferase (289 aa).

Belongs to the ATP phosphoribosyltransferase family. Long subfamily. Requires Mg(2+) as cofactor.

It is found in the cytoplasm. The catalysed reaction is 1-(5-phospho-beta-D-ribosyl)-ATP + diphosphate = 5-phospho-alpha-D-ribose 1-diphosphate + ATP. It functions in the pathway amino-acid biosynthesis; L-histidine biosynthesis; L-histidine from 5-phospho-alpha-D-ribose 1-diphosphate: step 1/9. Its activity is regulated as follows. Feedback inhibited by histidine. Functionally, catalyzes the condensation of ATP and 5-phosphoribose 1-diphosphate to form N'-(5'-phosphoribosyl)-ATP (PR-ATP). Has a crucial role in the pathway because the rate of histidine biosynthesis seems to be controlled primarily by regulation of HisG enzymatic activity. In Solibacter usitatus (strain Ellin6076), this protein is ATP phosphoribosyltransferase.